Consider the following 496-residue polypeptide: Glycerol kinase (496 aa).

Residue T12 participates in ADP binding. Residues T12, T13, and S14 each contribute to the ATP site. Residue T12 participates in sn-glycerol 3-phosphate binding. R16 serves as a coordination point for ADP. 3 residues coordinate sn-glycerol 3-phosphate: R82, E83, and Y134. Residues R82, E83, and Y134 each contribute to the glycerol site. A Phosphohistidine; by HPr modification is found at H230. Residue D244 coordinates sn-glycerol 3-phosphate. 2 residues coordinate glycerol: D244 and Q245. T266 and G309 together coordinate ADP. 4 residues coordinate ATP: T266, G309, Q313, and G410. 2 residues coordinate ADP: G410 and N414.

The protein belongs to the FGGY kinase family. Homotetramer and homodimer (in equilibrium). In terms of processing, the phosphoenolpyruvate-dependent sugar phosphotransferase system (PTS), including enzyme I, and histidine-containing protein (HPr) are required for the phosphorylation, which leads to the activation of the enzyme.

The enzyme catalyses glycerol + ATP = sn-glycerol 3-phosphate + ADP + H(+). It participates in polyol metabolism; glycerol degradation via glycerol kinase pathway; sn-glycerol 3-phosphate from glycerol: step 1/1. Activated by phosphorylation and inhibited by fructose 1,6-bisphosphate (FBP). In terms of biological role, key enzyme in the regulation of glycerol uptake and metabolism. Catalyzes the phosphorylation of glycerol to yield sn-glycerol 3-phosphate. The protein is Glycerol kinase of Bacillus mycoides (strain KBAB4) (Bacillus weihenstephanensis).